A 297-amino-acid chain; its full sequence is Cytosolic Fe-S cluster assembly factor CFD1 (297 aa).

15-22 (GKGGVGKS) contacts ATP. [4Fe-4S] cluster-binding residues include Cys216 and Cys219.

This sequence belongs to the Mrp/NBP35 ATP-binding proteins family. NUBP2/CFD1 subfamily. As to quaternary structure, heterotetramer of 2 NBP35 and 2 CFD1 chains. The cofactor is [4Fe-4S] cluster.

The protein resides in the cytoplasm. Functionally, component of the cytosolic iron-sulfur (Fe/S) protein assembly (CIA) machinery. Required for maturation of extramitochondrial Fe-S proteins. The NBP35-CFD1 heterotetramer forms a Fe-S scaffold complex, mediating the de novo assembly of an Fe-S cluster and its transfer to target apoproteins. The polypeptide is Cytosolic Fe-S cluster assembly factor CFD1 (Phaeosphaeria nodorum (strain SN15 / ATCC MYA-4574 / FGSC 10173) (Glume blotch fungus)).